The primary structure comprises 238 residues: Small ribosomal subunit protein uS2 (238 aa).

The protein belongs to the universal ribosomal protein uS2 family.

In Prochlorococcus marinus (strain SARG / CCMP1375 / SS120), this protein is Small ribosomal subunit protein uS2.